Consider the following 367-residue polypeptide: Probable butyrate kinase (367 aa).

Belongs to the acetokinase family.

The protein resides in the cytoplasm. The enzyme catalyses butanoate + ATP = butanoyl phosphate + ADP. The polypeptide is Probable butyrate kinase (Bacillus cereus (strain B4264)).